A 603-amino-acid polypeptide reads, in one-letter code: Terpenoid synthase 25 (603 aa).

Asp-356, Asp-360, Asn-500, Thr-504, and Glu-508 together coordinate Mg(2+). The short motif at 356–360 (DDTCD) is the DDXXD motif element.

This sequence belongs to the terpene synthase family. Tpsa subfamily. Requires Mg(2+) as cofactor. The cofactor is Mn(2+). Predominantly expressed in roots but also in flowers.

It is found in the cytoplasm. It functions in the pathway secondary metabolite biosynthesis; terpenoid biosynthesis. Involved in terpene biosynthesis in roots. Possesses sesquiterpene (C15) synthase activity in vitro. Does not seem to be involved in diterpene (C20) biosynthesis. The protein is Terpenoid synthase 25 of Arabidopsis thaliana (Mouse-ear cress).